The following is a 590-amino-acid chain: Ovarian abundant message protein (590 aa).

The disordered stretch occupies residues 1–71 (MQGTDNAPPG…SPGQPLVEEQ (71 aa)). Over residues 18-29 (SPRRIRHVRRHY) the composition is skewed to basic residues. 27 tandem repeats follow at residues 66–71 (PLVEEQ), 72–77 (PLVEER), 78–83 (PPVEEQ), 84–89 (PLVEEQ), 90–95 (PLVEEQ), 96–101 (PLVEEQ), 102–107 (PLVEEQ), 108–113 (PLVEGQ), 114–119 (PLVEEQ), 120–125 (PLVEGQ), 126–131 (PPVEGQ), 132–137 (PLVEEQ), 138–143 (PLVEGQ), 144–149 (PLVEGQ), 150–155 (PLVEGQ), 156–161 (PLVEGQ), 162–167 (PLVGGQ), 168–173 (PLVGGQ), 174–179 (PLVEGQ), 180–185 (PLVEGQ), 300–305 (PLAGAP), 306–311 (PLAGVP), 312–317 (PLAVAL), 318–323 (PLAGAP), 324–329 (PLAGVP), 330–335 (PLAGAP), and 336–341 (PLAGAL). The tract at residues 66–185 (PLVEEQPLVE…VEGQPLVEGQ (120 aa)) is 20 X 6 AA tandem repeats of P-[LP]-V-[EG]-[EG]-[QR]. Residues 300–347 (PLAGAPPLAGVPPLAVALPLAGAPPLAGVPPLAGAPPLAGALPRAGVL) are 8 X 6 AA approximate tandem repeats of P-L-A-[GV]-[AV]-[PL]. The stretch at 342–347 (PRAGVL) is one 2-8; approximate repeat. A run of 16 repeats spans residues 348-353 (RRAGVL), 354-359 (RRAGVL), 360-365 (RRAGVL), 366-371 (RRAGVL), 372-377 (RRAGVL), 378-383 (RRAGVL), 384-389 (RRAGVL), 390-395 (RRAGVL), 396-401 (RRAGVL), 402-407 (RRADVL), 408-413 (RRADVV), 419-424 (QQLADV), 425-430 (QRLADV), 431-436 (QRLADV), 437-442 (QRLADV), and 443-448 (QRLADV). An 11 X 6 AA tandem repeats of approximate R-R-A-[GD]-V-[LV] region spans residues 348–413 (RRAGVLRRAG…ADVLRRADVV (66 aa)). Residues 419-454 (QQLADVQRLADVQRLADVQRLADVQRLADVQRLVCV) are 6 X 6 AA approximate tandem repeats of Q-[QR]-L-A-D-V. The stretch at 449–454 (QRLVCV) is one 4-6; approximate repeat.

Somatic ovarian tissue.

This is Ovarian abundant message protein (OAM) from Ascaris suum (Pig roundworm).